We begin with the raw amino-acid sequence, 248 residues long: tRNA pseudouridine synthase A (248 aa).

The active-site Nucleophile is the aspartate 53. Tyrosine 116 contributes to the substrate binding site.

This sequence belongs to the tRNA pseudouridine synthase TruA family. Homodimer.

It carries out the reaction uridine(38/39/40) in tRNA = pseudouridine(38/39/40) in tRNA. Functionally, formation of pseudouridine at positions 38, 39 and 40 in the anticodon stem and loop of transfer RNAs. In Helicobacter hepaticus (strain ATCC 51449 / 3B1), this protein is tRNA pseudouridine synthase A.